Consider the following 260-residue polypeptide: Hemin import ATP-binding protein HmuV (260 aa).

An ABC transporter domain is found at 3–239 (LHAQQISLSI…QRLSEVYGCD (237 aa)). ATP is bound at residue 35–42 (GPNGSGKS).

This sequence belongs to the ABC transporter superfamily. Heme (hemin) importer (TC 3.A.1.14.5) family. In terms of assembly, the complex is composed of two ATP-binding proteins (HmuV), two transmembrane proteins (HmuU) and a solute-binding protein (HmuT).

It is found in the cell inner membrane. Its function is as follows. Part of the ABC transporter complex HmuTUV involved in hemin import. Responsible for energy coupling to the transport system. This is Hemin import ATP-binding protein HmuV from Ruegeria sp. (strain TM1040) (Silicibacter sp.).